Here is a 320-residue protein sequence, read N- to C-terminus: Cytochrome f (320 aa).

The signal sequence occupies residues 1 to 35; that stretch reads MQTRKTLSWIKEEITRSISLSLMLSIITHASLSNA. Heme-binding residues include Tyr-36, Cys-56, Cys-59, and His-60. The chain crosses the membrane as a helical span at residues 286-306; it reads VQGLLFFLTSVLLAQIFLVLK.

Belongs to the cytochrome f family. In terms of assembly, the 4 large subunits of the cytochrome b6-f complex are cytochrome b6, subunit IV (17 kDa polypeptide, petD), cytochrome f and the Rieske protein, while the 4 small subunits are PetG, PetL, PetM and PetN. The complex functions as a dimer. Requires heme as cofactor.

It is found in the plastid. Its subcellular location is the chloroplast thylakoid membrane. In terms of biological role, component of the cytochrome b6-f complex, which mediates electron transfer between photosystem II (PSII) and photosystem I (PSI), cyclic electron flow around PSI, and state transitions. This Pelargonium hortorum (Common geranium) protein is Cytochrome f.